A 356-amino-acid chain; its full sequence is N-acyl-phosphatidylethanolamine-hydrolyzing phospholipase D 1 (356 aa).

His-144 and His-146 together coordinate Zn(2+). Tyr-147 is a binding site for an N-acyl-1,2-diacyl-sn-glycero-3-phosphoethanolamine. Positions 148, 149, 217, and 248 each coordinate Zn(2+). His-286 is a binding site for an N-acyl-1,2-diacyl-sn-glycero-3-phosphoethanolamine. A Zn(2+)-binding site is contributed by His-308.

This sequence belongs to the NAPE-PLD family. Zn(2+) serves as cofactor. As to expression, expressed in interneurons that are in close proximity to the primary sensory neurons. Predominantly expressed in the pharynx but can also be found in cell bodies of the dorsal and ventral nerve cords.

It carries out the reaction an N-acyl-1,2-diacyl-sn-glycero-3-phosphoethanolamine + H2O = an N-acylethanolamine + a 1,2-diacyl-sn-glycero-3-phosphate + H(+). It catalyses the reaction 1,2-dihexadecanoyl-sn-glycero-3-phospho-(N-hexadecanoyl)-ethanolamine + H2O = 1,2-dihexadecanoyl-sn-glycero-3-phosphate + N-hexadecanoylethanolamine + H(+). The catalysed reaction is N-(5Z,8Z,11Z,14Z-eicosatetraenoyl)-1,2-di-(9Z-octadecenoyl)-sn-glycero-3-phosphoethanolamine + H2O = N-(5Z,8Z,11Z,14Z-eicosatetraenoyl)-ethanolamine + 1,2-di-(9Z-octadecenoyl)-sn-glycero-3-phosphate + H(+). In terms of biological role, D-type phospholipase that hydrolyzes N-acyl-phosphatidylethanolamines (NAPEs) to produce bioactive N-acylethanolamines/fatty acid ethanolamides (NAEs/FAEs) and phosphatidic acid. NAEs are bioactive lipids that are involved in diverse physiological processes such as growth and lifespan. In Caenorhabditis elegans, this protein is N-acyl-phosphatidylethanolamine-hydrolyzing phospholipase D 1.